The sequence spans 514 residues: Alpha-1B adrenergic receptor (514 aa).

Residues M1–A45 are Extracellular-facing. Residues N10, N24, N29, and N34 are each glycosylated (N-linked (GlcNAc...) asparagine). Residues I46–V69 form a helical membrane-spanning segment. At A70 to F82 the chain is on the cytoplasmic side. A helical membrane pass occupies residues I83–L104. Topologically, residues E105–R114 are extracellular. The chain crosses the membrane as a helical span at residues I115–I140. C117 and C194 are disulfide-bonded. Over D141–K160 the chain is Cytoplasmic. Residues A161–W183 traverse the membrane as a helical segment. At K184–P200 the chain is on the extracellular side. The helical transmembrane segment at F201 to C223 threads the bilayer. The Cytoplasmic portion of the chain corresponds to R224 to T294. Residue T263 is modified to Phosphothreonine. Residues L295–L318 form a helical membrane-spanning segment. Over F319–P325 the chain is Extracellular. Residues D326–S350 traverse the membrane as a helical segment. The Cytoplasmic segment spans residues S351–F514. C364 carries the S-palmitoyl cysteine lipid modification. The Nuclear localization signal signature appears at R367–R377. Disordered regions lie at residues G391–G429 and L473–F514. Residues S409–P423 show a composition bias toward polar residues.

This sequence belongs to the G-protein coupled receptor 1 family. Adrenergic receptor subfamily. ADRA1B sub-subfamily. In terms of assembly, homo- and heterooligomer. Heterooligomerizes with ADRA1B homooligomers in cardiac myocytes. Interacts with CAVIN4.

Its subcellular location is the nucleus membrane. It is found in the cell membrane. The protein resides in the cytoplasm. The protein localises to the membrane. It localises to the caveola. Its function is as follows. This alpha-adrenergic receptor mediates its action by association with G proteins that activate a phosphatidylinositol-calcium second messenger system. Its effect is mediated by G(q) and G(11) proteins. Nuclear ADRA1A-ADRA1B heterooligomers regulate phenylephrine (PE)-stimulated ERK signaling in cardiac myocytes. The sequence is that of Alpha-1B adrenergic receptor (Adra1b) from Mus musculus (Mouse).